Here is a 508-residue protein sequence, read N- to C-terminus: Photosystem II CP47 reaction center protein (508 aa).

6 helical membrane-spanning segments follow: residues 21 to 36 (SVHI…WAGS), 101 to 115 (IMLS…IWHW), 140 to 156 (GIHL…FGAF), 203 to 218 (IAAG…FHLS), 237 to 252 (VLSS…AFVV), and 457 to 472 (SFAL…HGAR).

The protein belongs to the PsbB/PsbC family. PsbB subfamily. PSII is composed of 1 copy each of membrane proteins PsbA, PsbB, PsbC, PsbD, PsbE, PsbF, PsbH, PsbI, PsbJ, PsbK, PsbL, PsbM, PsbT, PsbX, PsbY, PsbZ, Psb30/Ycf12, at least 3 peripheral proteins of the oxygen-evolving complex and a large number of cofactors. It forms dimeric complexes. Binds multiple chlorophylls. PSII binds additional chlorophylls, carotenoids and specific lipids. is required as a cofactor.

Its subcellular location is the plastid. The protein resides in the chloroplast thylakoid membrane. In terms of biological role, one of the components of the core complex of photosystem II (PSII). It binds chlorophyll and helps catalyze the primary light-induced photochemical processes of PSII. PSII is a light-driven water:plastoquinone oxidoreductase, using light energy to abstract electrons from H(2)O, generating O(2) and a proton gradient subsequently used for ATP formation. This is Photosystem II CP47 reaction center protein from Piper cenocladum (Ant piper).